The chain runs to 633 residues: Glutamyl-tRNA(Gln) amidotransferase subunit E (633 aa).

The segment at 415–437 is disordered; it reads LDDGTTKFLRPQPGSARMYPETD.

It belongs to the GatB/GatE family. GatE subfamily. Heterodimer of GatD and GatE.

The catalysed reaction is L-glutamyl-tRNA(Gln) + L-glutamine + ATP + H2O = L-glutaminyl-tRNA(Gln) + L-glutamate + ADP + phosphate + H(+). Its function is as follows. Allows the formation of correctly charged Gln-tRNA(Gln) through the transamidation of misacylated Glu-tRNA(Gln) in organisms which lack glutaminyl-tRNA synthetase. The reaction takes place in the presence of glutamine and ATP through an activated gamma-phospho-Glu-tRNA(Gln). The GatDE system is specific for glutamate and does not act on aspartate. The chain is Glutamyl-tRNA(Gln) amidotransferase subunit E from Saccharolobus solfataricus (strain ATCC 35092 / DSM 1617 / JCM 11322 / P2) (Sulfolobus solfataricus).